A 343-amino-acid chain; its full sequence is Anthranilate phosphoribosyltransferase (343 aa).

Residues glycine 81, glycine 84 to aspartate 85, asparagine 91 to threonine 94, lysine 109 to serine 117, and serine 121 each bind 5-phospho-alpha-D-ribose 1-diphosphate. Glycine 81 serves as a coordination point for anthranilate. Position 93 (serine 93) interacts with Mg(2+). Asparagine 112 serves as a coordination point for anthranilate. Arginine 167 is an anthranilate binding site. Aspartate 226 and glutamate 227 together coordinate Mg(2+).

Belongs to the anthranilate phosphoribosyltransferase family. As to quaternary structure, homodimer. Mg(2+) is required as a cofactor.

The catalysed reaction is N-(5-phospho-beta-D-ribosyl)anthranilate + diphosphate = 5-phospho-alpha-D-ribose 1-diphosphate + anthranilate. The protein operates within amino-acid biosynthesis; L-tryptophan biosynthesis; L-tryptophan from chorismate: step 2/5. Functionally, catalyzes the transfer of the phosphoribosyl group of 5-phosphorylribose-1-pyrophosphate (PRPP) to anthranilate to yield N-(5'-phosphoribosyl)-anthranilate (PRA). The sequence is that of Anthranilate phosphoribosyltransferase from Cellvibrio japonicus (strain Ueda107) (Pseudomonas fluorescens subsp. cellulosa).